We begin with the raw amino-acid sequence, 217 residues long: UPF0502 protein ETA_20480 (217 aa).

Residues 169–188 (GEVDESSRADGHHPDDHRGD) form a disordered region. Positions 173–188 (ESSRADGHHPDDHRGD) are enriched in basic and acidic residues.

This sequence belongs to the UPF0502 family.

The chain is UPF0502 protein ETA_20480 from Erwinia tasmaniensis (strain DSM 17950 / CFBP 7177 / CIP 109463 / NCPPB 4357 / Et1/99).